The following is a 322-amino-acid chain: Sideroflexin-2 (322 aa).

Met-1 carries the N-acetylmethionine modification. Transmembrane regions (helical) follow at residues 100–122 (MIITGFMLQFYRTMPAVIFWQWV), 142–164 (SVRQMAVSYITATTTAVATAVGM), 174–192 (LVGRWVPFAAVAAANCVNI), 228–250 (VVISRITMAAPGMILLPVLMERL), and 265–287 (PLQVLLSGCFLIFMVPVACGLFP).

It belongs to the sideroflexin family.

The protein resides in the mitochondrion inner membrane. It localises to the mitochondrion outer membrane. It catalyses the reaction L-serine(in) = L-serine(out). In terms of biological role, mitochondrial amino-acid transporter that mediates transport of serine into mitochondria. Involved in mitochondrial iron homeostasis by regulating heme biosynthesis. The polypeptide is Sideroflexin-2 (Bos taurus (Bovine)).